Consider the following 257-residue polypeptide: Phosphonates import ATP-binding protein PhnC (257 aa).

Residues 2–246 (IEFRNVSKVY…KFAEIYGDVA (245 aa)) enclose the ABC transporter domain. 35–42 (GLSGAGKS) contributes to the ATP binding site.

Belongs to the ABC transporter superfamily. Phosphonates importer (TC 3.A.1.9.1) family. As to quaternary structure, the complex is composed of two ATP-binding proteins (PhnC), two transmembrane proteins (PhnE) and a solute-binding protein (PhnD).

It localises to the cell membrane. The enzyme catalyses phosphonate(out) + ATP + H2O = phosphonate(in) + ADP + phosphate + H(+). In terms of biological role, part of the ABC transporter complex PhnCDE involved in phosphonates import. Responsible for energy coupling to the transport system. The chain is Phosphonates import ATP-binding protein PhnC from Bacillus cereus (strain ZK / E33L).